The sequence spans 239 residues: Ribosomal RNA small subunit methyltransferase G (239 aa).

S-adenosyl-L-methionine-binding positions include Gly77, Phe82, 128–129, and Arg146; that span reads AE. Residues 216-239 form a disordered region; the sequence is KRRQTSKKYPRKPGTPNKSPLVES.

It belongs to the methyltransferase superfamily. RNA methyltransferase RsmG family.

It is found in the cytoplasm. In terms of biological role, specifically methylates the N7 position of guanine in position 535 of 16S rRNA. In Staphylococcus epidermidis (strain ATCC 35984 / DSM 28319 / BCRC 17069 / CCUG 31568 / BM 3577 / RP62A), this protein is Ribosomal RNA small subunit methyltransferase G.